The sequence spans 424 residues: Lactate racemase (424 aa).

72 to 75 contacts Ni(II)-pyridinium-3,5-bisthiocarboxylate mononucleotide; that stretch reads DHTR. Residues H108 and H174 each act as proton donor/acceptor in the active site. Ni(II)-pyridinium-3,5-bisthiocarboxylate mononucleotide is bound by residues K184 and H200. Positions 295 and 298 each coordinate substrate.

The protein belongs to the lactate racemase family. Homodimer. Ni(II)-pyridinium-3,5-bisthiocarboxylate mononucleotide serves as cofactor.

The enzyme catalyses (S)-lactate = (R)-lactate. Activation of the apo-enzyme requires the three accessory proteins LarB, LarE and LarC, that are involved in the biosynthesis of the nickel-pincer cofactor of LarA. Inhibited by sulfite that behaves as a mixed inhibitor. Its function is as follows. Catalyzes the interconversion between the D- and L-isomers of lactate. May act as a rescue enzyme to ensure D-lactate production in physiological conditions where its production by the D-lactate dehydrogenase LdhD is not sufficient. D-Lactate is absolutely required for growth of L.plantarum and is an essential component of the cell wall peptidoglycan in this species, where it is incorporated as the last residue of the muramoyl-pentadepsipeptide peptidoglycan precursor; its incorporation confers high level of vancomycin resistance. The protein is Lactate racemase of Lactiplantibacillus plantarum (strain ATCC BAA-793 / NCIMB 8826 / WCFS1) (Lactobacillus plantarum).